Reading from the N-terminus, the 376-residue chain is Polycomb group protein FIE1 (376 aa).

WD repeat units lie at residues 85–127, 130–170, 176–216, 242–279, 291–332, and 339–376; these read DKDE…LLKT, GHGD…CILI, GHRN…PYVE, VHSN…QSPG, VPEC…PVLT, and QCKS…HPKA.

It belongs to the WD repeat ESC family. As to quaternary structure, interacts with EZ1. Component of the polycomb repressive complex 2 (PRC2), composed of the core PRC2 components EMF2B, EZ1 and CLF. PRC2 methylates 'Lys-27' residues of histone H3 (H3K27me3), leading to transcriptional repression of the affected target gene. Widely expressed.

Functionally, polycomb group (PcG) protein. PcG proteins act by forming multiprotein complexes, which are required to maintain the transcriptionally repressive state of homeotic genes throughout development. PcG proteins are not required to initiate repression, but to maintain it during later stages of development. They act via the methylation of histones, rendering chromatin heritably changed in its expressibility. Involved in the regulation of seed endosperm development, grain filling and seed dormancy. FIE2-containing PcG complex in seed endosperm regulates the expression of various transcription factors by trimethylation on histone H3 'Lys-27' (H3K27me3) of target genes. Involved in the overall expression regulation of a large number of nutrient metabolism genes. Involved in the regulation of seed endosperm development. Involved in the regulation of vegetative development, particularly in stem cell maintenance in the root system, where it maintains the suppression of key differentiation regulators. The sequence is that of Polycomb group protein FIE1 from Oryza sativa subsp. japonica (Rice).